A 397-amino-acid chain; its full sequence is Ubiquitin-like modifier-activating enzyme 5 (397 aa).

5 residues coordinate ATP: glycine 77, aspartate 98, lysine 121, asparagine 144, and asparagine 178. The Zn(2+) site is built by cysteine 220 and cysteine 223. The Glycyl thioester intermediate role is filled by cysteine 244. Residues cysteine 297 and cysteine 302 each contribute to the Zn(2+) site.

This sequence belongs to the ubiquitin-activating E1 family. UBA5 subfamily.

Its function is as follows. E1-like enzyme which activates UFM1. This is Ubiquitin-like modifier-activating enzyme 5 from Culex quinquefasciatus (Southern house mosquito).